Consider the following 231-residue polypeptide: Ribose-5-phosphate isomerase A (231 aa).

Substrate is bound by residues 32 to 35, 85 to 88, and 98 to 101; these read TGST, DGAD, and KGGG. Catalysis depends on glutamate 107, which acts as the Proton acceptor. Lysine 125 contributes to the substrate binding site.

This sequence belongs to the ribose 5-phosphate isomerase family. In terms of assembly, homodimer.

The catalysed reaction is aldehydo-D-ribose 5-phosphate = D-ribulose 5-phosphate. Its pathway is carbohydrate degradation; pentose phosphate pathway; D-ribose 5-phosphate from D-ribulose 5-phosphate (non-oxidative stage): step 1/1. In terms of biological role, catalyzes the reversible conversion of ribose-5-phosphate to ribulose 5-phosphate. The chain is Ribose-5-phosphate isomerase A from Paraburkholderia phymatum (strain DSM 17167 / CIP 108236 / LMG 21445 / STM815) (Burkholderia phymatum).